The sequence spans 284 residues: Stomatin (284 aa).

Residues Met-1–Gly-31 lie on the Cytoplasmic side of the membrane. Ser-18 carries the phosphoserine modification. Cys-30 is lipidated: S-palmitoyl cysteine. Residues Trp-32 to Ile-52 lie within the membrane without spanning it. Residues Cys-53 to His-284 are Cytoplasmic-facing. Cys-87 carries the S-palmitoyl cysteine lipid modification. Phosphoserine is present on residues Ser-161 and Ser-244. The segment at Ser-265 to Val-273 is required for homooligomerization. Residues Ile-267–Phe-269 form a required for lipid raft association region. The segment at Val-273–His-284 is interaction with LANCL1.

Belongs to the band 7/mec-2 family. Interacts with LANCL1. Interacts with SLC2A1. Interacts with SLC4A1; this interaction positively regulates SLC4A1 activity. Identified in large complexes with SLC40A1, SLC14A1, SLC29A1 and AQP1. Homodimer and higher order homooligomers. The homodimer is banana-shaped. Interacts with ASIC1, ASIC2 and ASIC3. Interacts with STOML1; may redistribute STOM from the plasma membrane to late endosomes. In terms of tissue distribution, expressed in all sensory neurons of the dorsal root ganglia. In the CNS, expressed in many neurons of the spinal cord, medulla and pons. Expressed only in scattered neurons in the cortex, hippocampus, thalamus and basal ganglia. In the cerebellum, expressed in all Purkinje cells (at protein level). Widely expressed with high levels in heart, liver, skeletal muscle and testis and low levels in lung, brain and spleen.

Its subcellular location is the cell membrane. It is found in the cytoplasm. It localises to the cytoskeleton. The protein localises to the membrane raft. The protein resides in the melanosome. Its subcellular location is the cytoplasmic vesicle. Its function is as follows. Regulates ion channel activity and transmembrane ion transport. Regulates ASIC2 and ASIC3 channel activity. In Mus musculus (Mouse), this protein is Stomatin.